A 438-amino-acid chain; its full sequence is Aspartyl protease 25 (438 aa).

A signal peptide spans Met-1–Ala-23. The region spanning Tyr-79–Ala-433 is the Peptidase A1 domain. Asp-97 is a catalytic residue. A disulfide bridge connects residues Cys-107 and Cys-113. N-linked (GlcNAc...) asparagine glycans are attached at residues Asn-123, Asn-193, and Asn-282. Residue Asp-313 is part of the active site. A disulfide bond links Cys-352 and Cys-394.

Belongs to the peptidase A1 family.

In terms of biological role, anther-specific aspartic protease involved in tapetal programmed cell death (PCD). Directly regulated by the transcription factor EAT1/DTD in anthers during tapetum PCD and degeneration. This Oryza sativa subsp. japonica (Rice) protein is Aspartyl protease 25.